A 352-amino-acid chain; its full sequence is CMP-sialic acid transporter 4 (352 aa).

The Cytoplasmic portion of the chain corresponds to 1 to 51 (MEYRKIKDEDDHDVASDIESVKGKSHTVASSNIAMATLGVGSSERINWKRK). A helical membrane pass occupies residues 52–72 (GVVTCALTILTSSQAILIVWS). Over 73–81 (KRAGKYEYS) the chain is Lumenal. A helical transmembrane segment spans residues 82 to 102 (VTTANFLVGTLKCALSLLALT). The Cytoplasmic portion of the chain corresponds to 103-124 (RIWKNEGVTDDNRLSTTFDEVK). A helical transmembrane segment spans residues 125–145 (VFPIPAALYLFKNLLQYYIFA). Residues 146-174 (YVDAPGYQILKNLNIISTGVLYRIILKRK) lie on the Lumenal side of the membrane. A helical membrane pass occupies residues 175 to 195 (LSEIQWAGFILLCCGCTTAQL). Residues 196–210 (NSNSDRVLQTSLPGW) lie on the Cytoplasmic side of the membrane. The helical transmembrane segment at 211–231 (TMAIVMALLSGFAGVYTEAII) threads the bilayer. Topologically, residues 232–238 (KKRPSRN) are lumenal. A helical transmembrane segment spans residues 239-259 (INVQNFWLYVFGMAFNAVAIV). At 260–276 (IQDFDAVANKGFFHGYS) the chain is on the cytoplasmic side. The helical transmembrane segment at 277–297 (FITLLMILNHALSGIAVSMVM) threads the bilayer. Topologically, residues 298–313 (KYADNIVKVYSTSVAM) are lumenal. Residues 314–334 (LLTAVVSVFLFNFHLSLAFFL) form a helical membrane-spanning segment. Residues 335 to 352 (GSTVVSVSVYLHSAGKLR) lie on the Cytoplasmic side of the membrane.

It belongs to the nucleotide-sugar transporter family. CMP-Sialate:CMP antiporter (TC 2.A.7.12) subfamily.

It is found in the golgi apparatus membrane. Sugar transporter involved in the transport of CMP-sialic acid from the cytoplasm into the Golgi. Essential protein. The sequence is that of CMP-sialic acid transporter 4 from Arabidopsis thaliana (Mouse-ear cress).